A 245-amino-acid chain; its full sequence is MSTLFESFEVIPAVDMQDGDVVQLVQGERGTETRYGDPVVAAKQWVEAGAKTLHLVDLDGAFEGDRMNATAVDAIIDAVDIPVQLGGGIRTANDAASLLDRGVNRVILGTAAVENPDLVAELAESYPGRIIVSLDAADGEVVVSGWTESTGIDPAVAAARFADYGACGILFTDVDVEGKLAGIQSSVTARVIDAVDIPVIASGGVASLDDIQTLHTTGAAATVVGTALYENKFTLADAMEVCESD.

Asp15 serves as the catalytic Proton acceptor. Residue Asp135 is the Proton donor of the active site.

It belongs to the HisA/HisF family.

It is found in the cytoplasm. The enzyme catalyses 1-(5-phospho-beta-D-ribosyl)-5-[(5-phospho-beta-D-ribosylamino)methylideneamino]imidazole-4-carboxamide = 5-[(5-phospho-1-deoxy-D-ribulos-1-ylimino)methylamino]-1-(5-phospho-beta-D-ribosyl)imidazole-4-carboxamide. Its pathway is amino-acid biosynthesis; L-histidine biosynthesis; L-histidine from 5-phospho-alpha-D-ribose 1-diphosphate: step 4/9. The protein is 1-(5-phosphoribosyl)-5-[(5-phosphoribosylamino)methylideneamino] imidazole-4-carboxamide isomerase of Haloquadratum walsbyi (strain DSM 16790 / HBSQ001).